Here is a 543-residue protein sequence, read N- to C-terminus: T-complex protein 1 subunit eta (543 aa).

Residue M1 is modified to N-acetylmethionine. Position 41 (G41) interacts with ADP. G41 serves as a coordination point for ATP. K67 is subject to N6-acetyllysine. Position 92 (D92) interacts with Mg(2+). The ADP site is built by G93, T94, T95, S96, S164, and S165. G93 lines the ATP pocket. S96 contacts ATP. N6-acetyllysine is present on residues K250 and K320. R398 and G409 together coordinate ATP. G409 lines the ADP pocket. A Glycyl lysine isopeptide (Lys-Gly) (interchain with G-Cter in SUMO2) cross-link involves residue K430. E494 and R499 together coordinate ADP. R499 serves as a coordination point for ATP. The disordered stretch occupies residues 524 to 543; sequence RSTVDASPAAGRGRGRGRLH. An Omega-N-methylarginine modification is found at R535.

It belongs to the TCP-1 chaperonin family. As to quaternary structure, component of the chaperonin-containing T-complex (TRiC), a hexadecamer composed of two identical back-to-back stacked rings enclosing a protein folding chamber. Each ring is made up of eight different subunits: TCP1/CCT1, CCT2, CCT3, CCT4, CCT5, CCT6A/CCT6, CCT7, CCT8. Interacts with PACRG. Interacts with DLEC1.

It localises to the cytoplasm. The catalysed reaction is ATP + H2O = ADP + phosphate + H(+). Component of the chaperonin-containing T-complex (TRiC), a molecular chaperone complex that assists the folding of actin, tubulin and other proteins upon ATP hydrolysis. The TRiC complex mediates the folding of WRAP53/TCAB1, thereby regulating telomere maintenance. The sequence is that of T-complex protein 1 subunit eta (CCT7) from Bos taurus (Bovine).